Consider the following 107-residue polypeptide: Ferredoxin (107 aa).

4Fe-4S ferredoxin-type domains follow at residues 2 to 30 (TYVVTDECVKCKYTDCVEVCPVDCFYEGE) and 31 to 60 (FMLVINPDECIDCGVCVPDCPIDAIKPETP). [3Fe-4S] cluster is bound by residues cysteine 9 and cysteine 17. 4 residues coordinate [4Fe-4S] cluster: cysteine 21, cysteine 40, cysteine 43, and cysteine 46. Cysteine 50 is a binding site for [3Fe-4S] cluster.

[4Fe-4S] cluster is required as a cofactor. The cofactor is [3Fe-4S] cluster.

Its function is as follows. Ferredoxins are iron-sulfur proteins that transfer electrons in a wide variety of metabolic reactions. The polypeptide is Ferredoxin (fdxA) (Rickettsia bellii (strain RML369-C)).